We begin with the raw amino-acid sequence, 536 residues long: CTP synthase (536 aa).

The segment at 1 to 267 (MSKFVFVTGG…CKETLKYLEL (267 aa)) is amidoligase domain. Serine 13 is a binding site for CTP. Position 13 (serine 13) interacts with UTP. ATP contacts are provided by residues 14-19 (SIGKGI) and aspartate 71. Residues aspartate 71 and glutamate 141 each contribute to the Mg(2+) site. Residues 148–150 (DIE), 188–193 (KTKPTQ), and lysine 224 each bind CTP. UTP-binding positions include 188 to 193 (KTKPTQ) and lysine 224. A Glutamine amidotransferase type-1 domain is found at 292-534 (KVALVGKYIE…IKASQEKLTQ (243 aa)). L-glutamine is bound at residue glycine 354. Cysteine 381 acts as the Nucleophile; for glutamine hydrolysis in catalysis. Residues 382–385 (LGMQ), glutamate 405, and arginine 462 contribute to the L-glutamine site. Active-site residues include histidine 507 and glutamate 509.

This sequence belongs to the CTP synthase family. As to quaternary structure, homotetramer.

The enzyme catalyses UTP + L-glutamine + ATP + H2O = CTP + L-glutamate + ADP + phosphate + 2 H(+). It catalyses the reaction L-glutamine + H2O = L-glutamate + NH4(+). It carries out the reaction UTP + NH4(+) + ATP = CTP + ADP + phosphate + 2 H(+). It participates in pyrimidine metabolism; CTP biosynthesis via de novo pathway; CTP from UDP: step 2/2. Allosterically activated by GTP, when glutamine is the substrate; GTP has no effect on the reaction when ammonia is the substrate. The allosteric effector GTP functions by stabilizing the protein conformation that binds the tetrahedral intermediate(s) formed during glutamine hydrolysis. Inhibited by the product CTP, via allosteric rather than competitive inhibition. Catalyzes the ATP-dependent amination of UTP to CTP with either L-glutamine or ammonia as the source of nitrogen. Regulates intracellular CTP levels through interactions with the four ribonucleotide triphosphates. This chain is CTP synthase, found in Prochlorococcus marinus (strain MIT 9215).